Here is a 224-residue protein sequence, read N- to C-terminus: Adenylate kinase (224 aa).

10-15 (GSGKST) provides a ligand contact to ATP. The NMP stretch occupies residues 30–59 (SSGDMIRAEIEKGSELGKELKKYLAKGELI). AMP contacts are provided by residues serine 31, arginine 36, 57–59 (ELI), 83–86 (GYPR), and glutamine 90. The segment at 124–161 (GRRICPKCGAVYHLRYRPPKVPGKCDLCGSQLIQREDD) is LID. Arginine 125 serves as a coordination point for ATP. Residues cysteine 128 and cysteine 131 each coordinate Zn(2+). ATP is bound at residue 134–135 (VY). Positions 148 and 151 each coordinate Zn(2+). AMP is bound by residues arginine 158 and arginine 169. Residue glycine 197 participates in ATP binding.

Belongs to the adenylate kinase family. In terms of assembly, monomer.

It localises to the cytoplasm. The catalysed reaction is AMP + ATP = 2 ADP. It participates in purine metabolism; AMP biosynthesis via salvage pathway; AMP from ADP: step 1/1. Catalyzes the reversible transfer of the terminal phosphate group between ATP and AMP. Plays an important role in cellular energy homeostasis and in adenine nucleotide metabolism. The polypeptide is Adenylate kinase (Thermococcus onnurineus (strain NA1)).